We begin with the raw amino-acid sequence, 210 residues long: Probable septum site-determining protein MinC (210 aa).

This sequence belongs to the MinC family. As to quaternary structure, interacts with MinD and FtsZ.

Its function is as follows. Cell division inhibitor that blocks the formation of polar Z ring septums. Rapidly oscillates between the poles of the cell to destabilize FtsZ filaments that have formed before they mature into polar Z rings. Prevents FtsZ polymerization. The protein is Probable septum site-determining protein MinC of Thermotoga petrophila (strain ATCC BAA-488 / DSM 13995 / JCM 10881 / RKU-1).